Reading from the N-terminus, the 170-residue chain is Peptide deformylase (170 aa).

Fe cation is bound by residues Cys-94 and His-136. Glu-137 is a catalytic residue. His-140 serves as a coordination point for Fe cation.

It belongs to the polypeptide deformylase family. Fe(2+) is required as a cofactor.

It carries out the reaction N-terminal N-formyl-L-methionyl-[peptide] + H2O = N-terminal L-methionyl-[peptide] + formate. In terms of biological role, removes the formyl group from the N-terminal Met of newly synthesized proteins. Requires at least a dipeptide for an efficient rate of reaction. N-terminal L-methionine is a prerequisite for activity but the enzyme has broad specificity at other positions. This chain is Peptide deformylase, found in Stenotrophomonas maltophilia (strain K279a).